Here is a 129-residue protein sequence, read N- to C-terminus: Chorion class A protein L11 (129 aa).

The first 21 residues, 1-21, serve as a signal peptide directing secretion; that stretch reads MSTFAFLLLCVQACLIQNVYG. The tract at residues 22 to 64 is left arm; the sequence is QCLGRGLGGCGCGGGLGGYGLGYGLGGYGGGYGYGGYGGGYYG. Residues 65 to 112 are central domain; it reads GYGGEGVGNVGVAGVLPVGGVTAVGGRVPIIGGVEFGGPACAGGCVSI. The right arm stretch occupies residues 113–129; the sequence is CGHCAPTCGCGYGGLYY.

This sequence belongs to the chorion protein family.

In terms of biological role, this protein is one of many from the eggshell of the silk moth. This chain is Chorion class A protein L11, found in Bombyx mori (Silk moth).